A 313-amino-acid polypeptide reads, in one-letter code: Homoserine O-succinyltransferase (313 aa).

The Acyl-thioester intermediate role is filled by C142. Residues K163 and S192 each contribute to the substrate site. H235 functions as the Proton acceptor in the catalytic mechanism. E237 is a catalytic residue. Residue R249 coordinates substrate.

It belongs to the MetA family.

The protein localises to the cytoplasm. It catalyses the reaction L-homoserine + succinyl-CoA = O-succinyl-L-homoserine + CoA. It functions in the pathway amino-acid biosynthesis; L-methionine biosynthesis via de novo pathway; O-succinyl-L-homoserine from L-homoserine: step 1/1. Its function is as follows. Transfers a succinyl group from succinyl-CoA to L-homoserine, forming succinyl-L-homoserine. The polypeptide is Homoserine O-succinyltransferase (Shewanella oneidensis (strain ATCC 700550 / JCM 31522 / CIP 106686 / LMG 19005 / NCIMB 14063 / MR-1)).